A 587-amino-acid polypeptide reads, in one-letter code: Polyadenylate-binding protein-interacting protein 3 (587 aa).

Residues 51-132 (LLVYFTTCNI…LVQVIAKDLP (82 aa)) form the Sm domain. Residues 422–503 (AKSENSSGWP…QSPQSPVFDG (82 aa)) are disordered. Over residues 431 to 464 (PGSSISRNSENSAASSASNLPILSPSSSGSLSSE) the composition is skewed to low complexity. The PAM2-like 1; degenerate signature appears at 467 to 475 (TLNPNAKEF). The PAM2-like 2 signature appears at 476 to 486 (KLNPNAKSFKP). The span at 486 to 498 (PSPSATRPQSPQS) shows a compositional bias: polar residues.

The chain is Polyadenylate-binding protein-interacting protein 3 (CID3) from Arabidopsis thaliana (Mouse-ear cress).